Consider the following 116-residue polypeptide: Ribosome-binding factor A (116 aa).

The protein belongs to the RbfA family. As to quaternary structure, monomer. Binds 30S ribosomal subunits, but not 50S ribosomal subunits or 70S ribosomes.

Its subcellular location is the cytoplasm. One of several proteins that assist in the late maturation steps of the functional core of the 30S ribosomal subunit. Associates with free 30S ribosomal subunits (but not with 30S subunits that are part of 70S ribosomes or polysomes). Required for efficient processing of 16S rRNA. May interact with the 5'-terminal helix region of 16S rRNA. This Malacoplasma penetrans (strain HF-2) (Mycoplasma penetrans) protein is Ribosome-binding factor A.